A 144-amino-acid chain; its full sequence is Large ribosomal subunit protein uL15 (144 aa).

Residues 1-57 form a disordered region; it reads MRLNTLSPAPGSKPSAKRVGRGIGSGLGKTCGRGHKGQKSRSGGSVRPGFEGGQMPL. Positions 21–31 are enriched in gly residues; sequence RGIGSGLGKTC.

It belongs to the universal ribosomal protein uL15 family. Part of the 50S ribosomal subunit.

In terms of biological role, binds to the 23S rRNA. In Photobacterium profundum (strain SS9), this protein is Large ribosomal subunit protein uL15.